The following is a 204-amino-acid chain: Tetraspanin-13 (204 aa).

The Cytoplasmic segment spans residues 1 to 19; it reads MVCGGFACSKNCLCALNLL. The helical transmembrane segment at 20–40 threads the bilayer; the sequence is YTLVSLLLIGIAAWGIGFGLI. The Extracellular segment spans residues 41 to 44; it reads SSLR. The helical transmembrane segment at 45–65 threads the bilayer; it reads VVGVVIAVGIFLFLIALVGLI. Residues 66-72 lie on the Cytoplasmic side of the membrane; the sequence is GAVKHHQ. A helical membrane pass occupies residues 73-93; sequence VLLFFYMIILLLVFIVQFSVS. Residues 94-167 lie on the Extracellular side of the membrane; the sequence is CACLALNQEQ…IGRYAGEVLR (74 aa). Residues asparagine 113 and asparagine 137 are each glycosylated (N-linked (GlcNAc...) asparagine). Phosphoserine is present on serine 143. Residues 168–188 traverse the membrane as a helical segment; that stretch reads FVGGIGLFFSFTEILGVWLTY. Residues 189–204 are Cytoplasmic-facing; the sequence is RYRNQKDPRANPSAFL.

This sequence belongs to the tetraspanin (TM4SF) family.

The protein resides in the membrane. In Bos taurus (Bovine), this protein is Tetraspanin-13 (TSPAN13).